We begin with the raw amino-acid sequence, 327 residues long: Phenylalanine--tRNA ligase alpha subunit (327 aa).

Glu252 contributes to the Mg(2+) binding site.

Belongs to the class-II aminoacyl-tRNA synthetase family. Phe-tRNA synthetase alpha subunit type 1 subfamily. As to quaternary structure, tetramer of two alpha and two beta subunits. It depends on Mg(2+) as a cofactor.

It localises to the cytoplasm. It catalyses the reaction tRNA(Phe) + L-phenylalanine + ATP = L-phenylalanyl-tRNA(Phe) + AMP + diphosphate + H(+). The polypeptide is Phenylalanine--tRNA ligase alpha subunit (Sodalis glossinidius (strain morsitans)).